The chain runs to 181 residues: Inner membrane-spanning protein YciB (181 aa).

Helical transmembrane passes span 10–30 (LIIFFAVYKFFDIYVASGALI), 50–70 (MHLITFVMVTVFGSLTLILHD), 72–92 (SFIKWKVTIVYALFAIALGVS), 118–138 (VTWYWVSFFVVCGLVNIYVAF), and 148–168 (FKVFGLTALTLINTVLTVLYL).

The protein belongs to the YciB family.

The protein resides in the cell inner membrane. Its function is as follows. Plays a role in cell envelope biogenesis, maintenance of cell envelope integrity and membrane homeostasis. The chain is Inner membrane-spanning protein YciB from Shewanella halifaxensis (strain HAW-EB4).